Consider the following 214-residue polypeptide: Probable transaldolase (214 aa).

The active-site Schiff-base intermediate with substrate is Lys-83.

Belongs to the transaldolase family. Type 3B subfamily.

The protein resides in the cytoplasm. It carries out the reaction D-sedoheptulose 7-phosphate + D-glyceraldehyde 3-phosphate = D-erythrose 4-phosphate + beta-D-fructose 6-phosphate. It participates in carbohydrate degradation; pentose phosphate pathway; D-glyceraldehyde 3-phosphate and beta-D-fructose 6-phosphate from D-ribose 5-phosphate and D-xylulose 5-phosphate (non-oxidative stage): step 2/3. In terms of biological role, transaldolase is important for the balance of metabolites in the pentose-phosphate pathway. The protein is Probable transaldolase of Alkaliphilus metalliredigens (strain QYMF).